The chain runs to 251 residues: 3-deoxy-manno-octulosonate cytidylyltransferase (251 aa).

This sequence belongs to the KdsB family.

The protein resides in the cytoplasm. The enzyme catalyses 3-deoxy-alpha-D-manno-oct-2-ulosonate + CTP = CMP-3-deoxy-beta-D-manno-octulosonate + diphosphate. The protein operates within nucleotide-sugar biosynthesis; CMP-3-deoxy-D-manno-octulosonate biosynthesis; CMP-3-deoxy-D-manno-octulosonate from 3-deoxy-D-manno-octulosonate and CTP: step 1/1. It functions in the pathway bacterial outer membrane biogenesis; lipopolysaccharide biosynthesis. Activates KDO (a required 8-carbon sugar) for incorporation into bacterial lipopolysaccharide in Gram-negative bacteria. This chain is 3-deoxy-manno-octulosonate cytidylyltransferase, found in Rhizobium johnstonii (strain DSM 114642 / LMG 32736 / 3841) (Rhizobium leguminosarum bv. viciae).